The following is a 252-amino-acid chain: Carbohydrate deacetylase (252 aa).

Residues histidine 59 and histidine 122 each coordinate Mg(2+).

The protein belongs to the YdjC deacetylase family. As to quaternary structure, homodimer. It depends on Mg(2+) as a cofactor.

In terms of biological role, probably catalyzes the deacetylation of acetylated carbohydrates an important step in the degradation of oligosaccharides. The sequence is that of Carbohydrate deacetylase from Vibrio cholerae serotype O1 (strain ATCC 39315 / El Tor Inaba N16961).